The sequence spans 493 residues: Transmembrane and coiled-coil domain-containing protein 6 (493 aa).

Residues 15-84 adopt a coiled-coil conformation; it reads GVEELRRRRR…QRGTEEKERE (70 aa). The next 2 membrane-spanning stretches (helical) occupy residues 338–358 and 386–406; these read VVAALFILLQFFFQKQPSLLP and PLLQLLPVSNVVSVMVLTVLC.

It localises to the membrane. This chain is Transmembrane and coiled-coil domain-containing protein 6 (TMCO6), found in Homo sapiens (Human).